Here is a 100-residue protein sequence, read N- to C-terminus: Large ribosomal subunit protein bL27 (100 aa).

The propeptide occupies M1 to F9.

It belongs to the bacterial ribosomal protein bL27 family. In terms of processing, the N-terminus is cleaved by ribosomal processing cysteine protease Prp.

The polypeptide is Large ribosomal subunit protein bL27 (Clostridium botulinum (strain 657 / Type Ba4)).